The chain runs to 226 residues: 7-cyano-7-deazaguanine synthase (226 aa).

ATP is bound at residue 12–22 (LSGGLDSATVV). Zn(2+) is bound by residues Cys191, Cys201, Cys204, and Cys207.

The protein belongs to the QueC family. Zn(2+) serves as cofactor.

The enzyme catalyses 7-carboxy-7-deazaguanine + NH4(+) + ATP = 7-cyano-7-deazaguanine + ADP + phosphate + H2O + H(+). It functions in the pathway purine metabolism; 7-cyano-7-deazaguanine biosynthesis. Catalyzes the ATP-dependent conversion of 7-carboxy-7-deazaguanine (CDG) to 7-cyano-7-deazaguanine (preQ(0)). In Pseudomonas syringae pv. tomato (strain ATCC BAA-871 / DC3000), this protein is 7-cyano-7-deazaguanine synthase.